We begin with the raw amino-acid sequence, 461 residues long: Cysteine--tRNA ligase (461 aa).

Cys30 lines the Zn(2+) pocket. Residues 32–42 carry the 'HIGH' region motif; that stretch reads VTVYDLCHIGH. Residues Cys211, His236, and Glu240 each coordinate Zn(2+). The short motif at 268 to 272 is the 'KMSKS' region element; the sequence is KMSKS. Residue Lys271 coordinates ATP.

This sequence belongs to the class-I aminoacyl-tRNA synthetase family. In terms of assembly, monomer. The cofactor is Zn(2+).

The protein resides in the cytoplasm. It carries out the reaction tRNA(Cys) + L-cysteine + ATP = L-cysteinyl-tRNA(Cys) + AMP + diphosphate. This is Cysteine--tRNA ligase from Shewanella sp. (strain ANA-3).